We begin with the raw amino-acid sequence, 730 residues long: Replication restart protein PriA (730 aa).

Residues 212-378 form the Helicase ATP-binding domain; sequence LLFHSGFNVW…QNGKYQHLVL (167 aa). Position 225–232 (225–232) interacts with ATP; it reads GVTGSGKT. A DEAH box motif is present at residues 321–324; it reads DEEH. Positions 437, 440, 446, 449, 464, 467, 477, and 480 each coordinate Zn(2+). The Helicase C-terminal domain maps to 472–640; sequence TIPRQCGDCG…LPPFTFQALI (169 aa).

It belongs to the helicase family. PriA subfamily. As to quaternary structure, component of the replication restart primosome. It depends on Zn(2+) as a cofactor.

It catalyses the reaction Couples ATP hydrolysis with the unwinding of duplex DNA by translocating in the 3'-5' direction.. The catalysed reaction is ATP + H2O = ADP + phosphate + H(+). Its function is as follows. Initiates the restart of stalled replication forks, which reloads the replicative helicase on sites other than the origin of replication. Recognizes and binds to abandoned replication forks and remodels them to uncover a helicase loading site. Promotes assembly of the primosome at these replication forks. The protein is Replication restart protein PriA of Haemophilus influenzae (strain ATCC 51907 / DSM 11121 / KW20 / Rd).